Consider the following 198-residue polypeptide: Holliday junction branch migration complex subunit RuvA (198 aa).

The domain I stretch occupies residues 1 to 64; it reads MYEYIKGKYI…EDFIGLYGFD (64 aa). The tract at residues 65-143 is domain II; the sequence is SKEELEMFKL…PDELVDSSLE (79 aa). The tract at residues 144–149 is flexible linker; the sequence is IDTKDN. The interval 150-198 is domain III; it reads ENVMALSEALSALIALGYSEKEAESVLKKIDKNDSVENIIKNALKALMG.

Belongs to the RuvA family. Homotetramer. Forms an RuvA(8)-RuvB(12)-Holliday junction (HJ) complex. HJ DNA is sandwiched between 2 RuvA tetramers; dsDNA enters through RuvA and exits via RuvB. An RuvB hexamer assembles on each DNA strand where it exits the tetramer. Each RuvB hexamer is contacted by two RuvA subunits (via domain III) on 2 adjacent RuvB subunits; this complex drives branch migration. In the full resolvosome a probable DNA-RuvA(4)-RuvB(12)-RuvC(2) complex forms which resolves the HJ.

The protein localises to the cytoplasm. Functionally, the RuvA-RuvB-RuvC complex processes Holliday junction (HJ) DNA during genetic recombination and DNA repair, while the RuvA-RuvB complex plays an important role in the rescue of blocked DNA replication forks via replication fork reversal (RFR). RuvA specifically binds to HJ cruciform DNA, conferring on it an open structure. The RuvB hexamer acts as an ATP-dependent pump, pulling dsDNA into and through the RuvAB complex. HJ branch migration allows RuvC to scan DNA until it finds its consensus sequence, where it cleaves and resolves the cruciform DNA. This is Holliday junction branch migration complex subunit RuvA from Clostridium beijerinckii (strain ATCC 51743 / NCIMB 8052) (Clostridium acetobutylicum).